The sequence spans 434 residues: MSEHASQSTLNRFFHAPLKEVDAEVATILNEELTRQQDGIELIASENMASFAVMEAQGSVLTNKYAEGLPGKRYYGGCVDVDRVENLAIDRLKKIFGAEFANVQPHSGANANQAAFMALAKPGDTVLGLSLAAGGHLTHGAAPNYSGKWFNSVQYGVRAEDGLIDYDQMEALAREHKPKIIVAGSSAYPRVIDFARFRKIADEVGAYLMVDMAHFAGLVAAGLYPNPVPMADITTSTTHKTLRGPRGGIILTNNPDLAKKVNSAVFPGLQGGPLMHVIAGKAVAFGEALSDEFKAYQKRVLANARALADELQNRGFDIVTGGTDSHLILVDLRPKKVTGKLAEAILERAGITANKNAIPFDPEKPFVTSGIRLGSPAATARGFGEAEFREVGRMIDEVLTAALEEDNAEAVTARVHEEVKALCRRFPIYDRASA.

Residues Leu131 and 135–137 (GHL) contribute to the (6S)-5,6,7,8-tetrahydrofolate site. Lys240 is subject to N6-(pyridoxal phosphate)lysine.

Belongs to the SHMT family. Homodimer. The cofactor is pyridoxal 5'-phosphate.

The protein resides in the cytoplasm. It catalyses the reaction (6R)-5,10-methylene-5,6,7,8-tetrahydrofolate + glycine + H2O = (6S)-5,6,7,8-tetrahydrofolate + L-serine. The protein operates within one-carbon metabolism; tetrahydrofolate interconversion. Its pathway is amino-acid biosynthesis; glycine biosynthesis; glycine from L-serine: step 1/1. In terms of biological role, catalyzes the reversible interconversion of serine and glycine with tetrahydrofolate (THF) serving as the one-carbon carrier. This reaction serves as the major source of one-carbon groups required for the biosynthesis of purines, thymidylate, methionine, and other important biomolecules. Also exhibits THF-independent aldolase activity toward beta-hydroxyamino acids, producing glycine and aldehydes, via a retro-aldol mechanism. This is Serine hydroxymethyltransferase from Gluconobacter oxydans (strain 621H) (Gluconobacter suboxydans).